The primary structure comprises 239 residues: Transcriptional regulatory protein BtsR (239 aa).

In terms of domain architecture, Response regulatory spans 3–116 (KVLIVDDEPL…RLEKTLARLR (114 aa)). Asp54 bears the 4-aspartylphosphate mark. Residues 137–239 (IPCTGHSRIY…LKSLKEAIGL (103 aa)) form the HTH LytTR-type domain.

Post-translationally, phosphorylated by BtsS.

Functionally, member of the two-component regulatory system BtsS/BtsR. BtsR regulates expression of btsT by binding to its promoter region. In Escherichia coli O6:H1 (strain CFT073 / ATCC 700928 / UPEC), this protein is Transcriptional regulatory protein BtsR.